The primary structure comprises 205 residues: tRNA (guanine-N(7)-)-methyltransferase (205 aa).

4 residues coordinate S-adenosyl-L-methionine: E36, E61, D88, and D109. D109 is a catalytic residue. Residue K113 participates in substrate binding. The segment at 115 to 120 (RHEKRR) is interaction with RNA. Substrate-binding positions include D145 and 183–186 (TGYE).

The protein belongs to the class I-like SAM-binding methyltransferase superfamily. TrmB family.

It carries out the reaction guanosine(46) in tRNA + S-adenosyl-L-methionine = N(7)-methylguanosine(46) in tRNA + S-adenosyl-L-homocysteine. It participates in tRNA modification; N(7)-methylguanine-tRNA biosynthesis. Functionally, catalyzes the formation of N(7)-methylguanine at position 46 (m7G46) in tRNA. This is tRNA (guanine-N(7)-)-methyltransferase from Mycoplasmopsis agalactiae (strain NCTC 10123 / CIP 59.7 / PG2) (Mycoplasma agalactiae).